The following is an 89-amino-acid chain: LSPTFYATSXPNVXXTRDSVVEIGQLADTVAPVRGFDVIDNIKDMVALSGSHTIGQARQATRSPAQVDLSNTRGLLGQAGNDFALVDDK.

H52 serves as a coordination point for heme. Ca(2+) is bound by residues T53 and D68.

It depends on heme b as a cofactor. Ca(2+) serves as cofactor.

The protein resides in the secreted. The enzyme catalyses 2 a phenolic donor + H2O2 = 2 a phenolic radical donor + 2 H2O. Its function is as follows. Removal of H(2)O(2), oxidation of toxic reductants, biosynthesis and degradation of lignin, suberization, auxin catabolism, response to environmental stresses such as wounding, pathogen attack and oxidative stress. These functions might be dependent on each isozyme/isoform in each plant tissue. Active against p-coumaryl alcohol, coniferyl alcohol and coniferyl aldehyde. The protein is Peroxidase of Ginkgo biloba (Ginkgo).